The following is a 172-amino-acid chain: Large ribosomal subunit protein eL20 (172 aa).

Belongs to the eukaryotic ribosomal protein eL20 family. As to quaternary structure, component of the large ribosomal subunit. Mature ribosomes consist of a small (40S) and a large (60S) subunit. The 40S subunit contains about 32 different proteins and 1 molecule of RNA (18S). The 60S subunit contains 45 different proteins and 3 molecules of RNA (25S, 5.8S and 5S).

It is found in the cytoplasm. Functionally, component of the ribosome, a large ribonucleoprotein complex responsible for the synthesis of proteins in the cell. The small ribosomal subunit (SSU) binds messenger RNAs (mRNAs) and translates the encoded message by selecting cognate aminoacyl-transfer RNA (tRNA) molecules. The large subunit (LSU) contains the ribosomal catalytic site termed the peptidyl transferase center (PTC), which catalyzes the formation of peptide bonds, thereby polymerizing the amino acids delivered by tRNAs into a polypeptide chain. The nascent polypeptides leave the ribosome through a tunnel in the LSU and interact with protein factors that function in enzymatic processing, targeting, and the membrane insertion of nascent chains at the exit of the ribosomal tunnel. The sequence is that of Large ribosomal subunit protein eL20 from Candida albicans (strain SC5314 / ATCC MYA-2876) (Yeast).